Here is a 383-residue protein sequence, read N- to C-terminus: Soluble hydrogenase 42 kDa subunit (383 aa).

N6-(pyridoxal phosphate)lysine is present on lysine 194.

Belongs to the class-V pyridoxal-phosphate-dependent aminotransferase family. As to quaternary structure, heterodimer of a large and a small subunit. Requires pyridoxal 5'-phosphate as cofactor.

The protein localises to the cytoplasm. Functionally, soluble hydrogenase catalyzes both production and consumption of hydrogen from suitable artificial electron donors or acceptors. This subunit catalyzes the tritium-exchange activity. This chain is Soluble hydrogenase 42 kDa subunit, found in Anabaena cylindrica.